Consider the following 182-residue polypeptide: Adenine phosphoribosyltransferase (182 aa).

It belongs to the purine/pyrimidine phosphoribosyltransferase family. In terms of assembly, homodimer.

The protein localises to the cytoplasm. It catalyses the reaction AMP + diphosphate = 5-phospho-alpha-D-ribose 1-diphosphate + adenine. It functions in the pathway purine metabolism; AMP biosynthesis via salvage pathway; AMP from adenine: step 1/1. In terms of biological role, catalyzes a salvage reaction resulting in the formation of AMP, that is energically less costly than de novo synthesis. The protein is Adenine phosphoribosyltransferase of Pseudomonas paraeruginosa (strain DSM 24068 / PA7) (Pseudomonas aeruginosa (strain PA7)).